The primary structure comprises 593 residues: DNA primase (593 aa).

The CHC2-type zinc finger occupies 40-64 (CPFHHEKTPSFTVSQKKQFYHCFGC). A Toprim domain is found at 260–342 (KQLLVVEGYM…GRQLKFIFLP (83 aa)). 3 residues coordinate Mg(2+): E266, D310, and D312.

The protein belongs to the DnaG primase family. As to quaternary structure, monomer. Interacts with DnaB. Requires Zn(2+) as cofactor. The cofactor is Mg(2+).

The enzyme catalyses ssDNA + n NTP = ssDNA/pppN(pN)n-1 hybrid + (n-1) diphosphate.. Functionally, RNA polymerase that catalyzes the synthesis of short RNA molecules used as primers for DNA polymerase during DNA replication. The protein is DNA primase of Haemophilus influenzae (strain ATCC 51907 / DSM 11121 / KW20 / Rd).